The following is a 429-amino-acid chain: O-methyltransferase phnC (429 aa).

An S-adenosyl-L-methionine-binding site is contributed by D285.

The protein belongs to the class I-like SAM-binding methyltransferase superfamily. Cation-independent O-methyltransferase family. COMT subfamily.

The enzyme catalyses (2'R)-atrovenetin + S-adenosyl-L-methionine = deoxyherqueinone + S-adenosyl-L-homocysteine + H(+). The protein operates within secondary metabolite biosynthesis. Functionally, O-methyltransferase; part of the gene cluster that mediates the biosynthesis of phenalenones such as herqueinone, compounds that have been reported to treat tumors, bacterial infections and/or mycoses, and rheumatic diseases. The non-reducing polyketide synthase phnA synthesizes the heptaketide backbone and cyclizes it into the angular, hemiketal-containing naphtho-gamma-pyrone prephenalenone. The product template (PT) domain of phnA catalyzes only the C4-C9 aldol condensation, which is unprecedented among known PT domains. The transformation of prephenalenone to phenalenones requires an FAD-dependent monooxygenase phnB, which catalyzes the C2 aromatic hydroxylation of prephenalenone and ring opening of the gamma-pyrone ring simultaneously. Subsequent intramolecular deprotonation of C3 phenolic oxygen accelerates phenalenone ring closure to yield the tricyclic phenalenone core with a C2 hydroxylation. The prenyltransferase phnF further catalyzes reverse C-prenylation of phenalenone by direct electrophilic substitution at C6, or possibly via first a forward O-prenylation of a neighboring phenol in phenalenone, followed by a Claisen rearrangement. The hydroalkoxylation enzyme phnH catalyzes the 5-exo-trig cyclization via acid catalysis after the spontaneous deprotonation of 7-OH, which leads to the formation of the dihydrobenzofuran atrovenetin. Atrovenetin is further converted to deoxyherqueinone by the O-methyltransferase phnC which can methylate C2-OH to stabilize the northern portion of the phenalenone core. Finally, the oxidoreductase phnG converts deoxyherqueinone to herqueinone via C6 hydroxylation. The chain is O-methyltransferase phnC from Penicillium herquei.